The sequence spans 280 residues: Phosphonoacetaldehyde hydrolase (280 aa).

The active-site Nucleophile is the Asp-23. Mg(2+)-binding residues include Asp-23 and Ala-25. Catalysis depends on Lys-64, which acts as the Schiff-base intermediate with substrate. Asp-197 serves as a coordination point for Mg(2+).

The protein belongs to the HAD-like hydrolase superfamily. PhnX family. Homodimer. Requires Mg(2+) as cofactor.

The enzyme catalyses phosphonoacetaldehyde + H2O = acetaldehyde + phosphate + H(+). Functionally, involved in phosphonate degradation. This is Phosphonoacetaldehyde hydrolase from Bordetella avium (strain 197N).